The primary structure comprises 116 residues: Non-specific lipid-transfer protein (116 aa).

An N-terminal signal peptide occupies residues 1-25; sequence MASMVMNVLCVAVACMVFSASYADA. 4 cysteine pairs are disulfide-bonded: C28–C75, C38–C52, C53–C98, and C73–C112.

It belongs to the plant LTP family.

Plant non-specific lipid-transfer proteins transfer phospholipids as well as galactolipids across membranes. May play a role in wax or cutin deposition in the cell walls of expanding epidermal cells and certain secretory tissues. The chain is Non-specific lipid-transfer protein from Gerbera hybrida (Daisy).